The chain runs to 221 residues: Urease accessory protein UreF (221 aa).

The protein belongs to the UreF family. As to quaternary structure, ureD, UreF and UreG form a complex that acts as a GTP-hydrolysis-dependent molecular chaperone, activating the urease apoprotein by helping to assemble the nickel containing metallocenter of UreC. The UreE protein probably delivers the nickel.

It is found in the cytoplasm. Its function is as follows. Required for maturation of urease via the functional incorporation of the urease nickel metallocenter. In Teredinibacter turnerae (strain ATCC 39867 / T7901), this protein is Urease accessory protein UreF.